Here is a 114-residue protein sequence, read N- to C-terminus: Nucleoid-associated protein Cyan7425_0899 (114 aa).

This sequence belongs to the YbaB/EbfC family. As to quaternary structure, homodimer.

The protein localises to the cytoplasm. Its subcellular location is the nucleoid. Functionally, binds to DNA and alters its conformation. May be involved in regulation of gene expression, nucleoid organization and DNA protection. The chain is Nucleoid-associated protein Cyan7425_0899 from Cyanothece sp. (strain PCC 7425 / ATCC 29141).